The following is a 610-amino-acid chain: DNA mismatch repair protein MutL (610 aa).

This sequence belongs to the DNA mismatch repair MutL/HexB family.

In terms of biological role, this protein is involved in the repair of mismatches in DNA. It is required for dam-dependent methyl-directed DNA mismatch repair. May act as a 'molecular matchmaker', a protein that promotes the formation of a stable complex between two or more DNA-binding proteins in an ATP-dependent manner without itself being part of a final effector complex. This chain is DNA mismatch repair protein MutL, found in Rickettsia rickettsii (strain Iowa).